The primary structure comprises 703 residues: DnaJ homolog subfamily C member 14 (703 aa).

Disordered regions lie at residues 1–150 and 164–229; these read MAQK…DGSS and EDEE…RKRS. Over residues 17–28 the composition is skewed to low complexity; sequence SGGSSLITSGSS. A compositionally biased stretch (pro residues) spans 75–84; it reads HGPPRGPGPP. 2 stretches are compositionally biased toward acidic residues: residues 89-102 and 164-176; these read YPDESETCSEESGV and EDEELEEEYDDEE. The segment covering 193-202 has biased composition (basic residues); the sequence is PPSRRQRHRF. The span at 203-218 shows a compositional bias: basic and acidic residues; the sequence is LTKEDVRDSGRRDPKA. The segment covering 219–228 has biased composition (basic residues); it reads PGRHRLARKR. The next 3 helical transmembrane spans lie at 254-274, 305-325, and 327-347; these read WWLIELLVLVGEYVETCGYLI, VMFQFLSQSFFSVAGLFIRLL, and VVGAFLLLALALFLGCLQLGW. Positions 444 to 508 constitute a J domain; sequence NPFHVLGVEA…ERRKEYEMKR (65 aa). Disordered regions lie at residues 622–643 and 659–703; these read FGSRVPGTSGRQRATPESPPAD and MSNG…PFQR. Residues 673-684 are compositionally biased toward polar residues; the sequence is GTTSTSRPNSSV. Basic residues predominate over residues 691–703; the sequence is PKRRKKVRRPFQR.

Interacts with the FxxxFxxxF motif of DRD1 via its C-terminal domain. Detected in heart, brain, lung, liver, skeletal muscle, kidney and testis.

Its subcellular location is the endoplasmic reticulum membrane. In terms of biological role, regulates the export of target proteins, such as DRD1, from the endoplasmic reticulum to the cell surface. This is DnaJ homolog subfamily C member 14 (Dnajc14) from Rattus norvegicus (Rat).